The chain runs to 465 residues: MKVGFISLGCPKNLVDSEVMMGQLVAKGHELTSHPDQADVLVVNTCSFIDPAKKESVDTILEMAEYKKIGRAKKLIVAGCLVERYRGDIRTEMPEVDALIGTNELDSIVDICEGMPPSTNPLEPYLYHDLTPRVLATPRHFAYMKIAEGCDHPCTFCVIPQYRGAFRSRRFESVVSEATRLFQQGIREINLIGQDTTCYGEDLGLKDGLAELLARLAQIETPQEKWIRFLYAYPNKVTQKLLDTLAEHAALAKYIDMPLQHASANVLKRMKRGASGDIFLKLIERIRRTIPGVAIRTSFIVGFPGETAADFDELCAFVEAAKFDNLGVFTYSDEDTSASYALDGKVDGRTIQNRKRRLMAIQRKIARARNRGLVGKEVPVLVSGVSGETDLLWEARMSTQAPEIDGVTLINDFEGSEPRAGEIRRLRITEAHDYDVVGTLLAPTEPAPVLPAGPGLINIESLVAV.

An MTTase N-terminal domain is found at 1 to 117 (MKVGFISLGC…IVDICEGMPP (117 aa)). 6 residues coordinate [4Fe-4S] cluster: Cys-10, Cys-46, Cys-80, Cys-150, Cys-154, and Cys-157. The region spanning 136-369 (ATPRHFAYMK…AIQRKIARAR (234 aa)) is the Radical SAM core domain. A TRAM domain is found at 371–442 (RGLVGKEVPV…DYDVVGTLLA (72 aa)).

Belongs to the methylthiotransferase family. RimO subfamily. It depends on [4Fe-4S] cluster as a cofactor.

It is found in the cytoplasm. The enzyme catalyses L-aspartate(89)-[ribosomal protein uS12]-hydrogen + (sulfur carrier)-SH + AH2 + 2 S-adenosyl-L-methionine = 3-methylsulfanyl-L-aspartate(89)-[ribosomal protein uS12]-hydrogen + (sulfur carrier)-H + 5'-deoxyadenosine + L-methionine + A + S-adenosyl-L-homocysteine + 2 H(+). Its function is as follows. Catalyzes the methylthiolation of an aspartic acid residue of ribosomal protein uS12. This chain is Ribosomal protein uS12 methylthiotransferase RimO, found in Solibacter usitatus (strain Ellin6076).